An 88-amino-acid chain; its full sequence is Small ribosomal subunit protein bS20 (88 aa).

The tract at residues 1 to 23 (MANTSSAKKATRKIARRAAINKN) is disordered.

The protein belongs to the bacterial ribosomal protein bS20 family.

Binds directly to 16S ribosomal RNA. This is Small ribosomal subunit protein bS20 from Mesorhizobium japonicum (strain LMG 29417 / CECT 9101 / MAFF 303099) (Mesorhizobium loti (strain MAFF 303099)).